Here is a 92-residue protein sequence, read N- to C-terminus: Protein S100-B (92 aa).

Ser2 is modified (blocked amino end (Ser); alternate). The residue at position 2 (Ser2) is an N-acetylserine; alternate. EF-hand domains follow at residues 13 to 48 (DVFH…LEEI) and 49 to 84 (KEQE…VTTA). His16 is a Zn(2+) binding site. Ca(2+) is bound by residues Ser19, Glu22, and Asp24. His26 contributes to the Zn(2+) binding site. Ca(2+)-binding residues include Lys27, Glu32, Asp62, Asp64, Asp66, Glu68, and Glu73. Residues His86 and His91 each contribute to the Zn(2+) site.

Belongs to the S-100 family. Dimer of either two alpha chains, or two beta chains, or one alpha and one beta chain. The S100B dimer binds two molecules of STK38. Interacts with CACYBP in a calcium-dependent manner. Interacts with ATAD3A; this interaction probably occurs in the cytosol prior to ATAD3A mitochondrial targeting. Interacts with S100A6. The S100B dimer interacts with two molecules of CAPZA1. Interacts with AGER. Interacts with PPP5C (via TPR repeats); the interaction is calcium-dependent and modulates PPP5C activity. Interacts with TPPP; this interaction inhibits TPPP dimerization. Interacts with isoform CLSTN3beta of CLSTN3; interaction promotes secretion. In terms of tissue distribution, although predominant among the water-soluble brain proteins, S100 is also found in a variety of other tissues.

The protein localises to the cytoplasm. Its subcellular location is the nucleus. It localises to the secreted. Small zinc- and- and calcium-binding protein that is highly expressed in astrocytes and constitutes one of the most abundant soluble proteins in brain. Weakly binds calcium but binds zinc very tightly-distinct binding sites with different affinities exist for both ions on each monomer. Physiological concentrations of potassium ion antagonize the binding of both divalent cations, especially affecting high-affinity calcium-binding sites. Acts as a neurotrophic factor that promotes astrocytosis and axonal proliferation. Involved in innervation of thermogenic adipose tissue by acting as an adipocyte-derived neurotrophic factor that promotes sympathetic innervation of adipose tissue. Binds to and initiates the activation of STK38 by releasing autoinhibitory intramolecular interactions within the kinase. Interaction with AGER after myocardial infarction may play a role in myocyte apoptosis by activating ERK1/2 and p53/TP53 signaling. Could assist ATAD3A cytoplasmic processing, preventing aggregation and favoring mitochondrial localization. May mediate calcium-dependent regulation on many physiological processes by interacting with other proteins, such as TPR-containing proteins, and modulating their activity. In Homo sapiens (Human), this protein is Protein S100-B.